The following is a 485-amino-acid chain: Glutamate--tRNA ligase 2 (485 aa).

The 'HIGH' region signature appears at 10–20 (PSPTGPIHIGN). The 'KMSKS' region signature appears at 252–256 (KLSKR). Lys255 contributes to the ATP binding site.

It belongs to the class-I aminoacyl-tRNA synthetase family. Glutamate--tRNA ligase type 1 subfamily. In terms of assembly, monomer.

It localises to the cytoplasm. It catalyses the reaction tRNA(Glu) + L-glutamate + ATP = L-glutamyl-tRNA(Glu) + AMP + diphosphate. Catalyzes the attachment of glutamate to tRNA(Glu) in a two-step reaction: glutamate is first activated by ATP to form Glu-AMP and then transferred to the acceptor end of tRNA(Glu). The polypeptide is Glutamate--tRNA ligase 2 (Caldanaerobacter subterraneus subsp. tengcongensis (strain DSM 15242 / JCM 11007 / NBRC 100824 / MB4) (Thermoanaerobacter tengcongensis)).